Here is a 137-residue protein sequence, read N- to C-terminus: Large ribosomal subunit protein uL16 (137 aa).

Belongs to the universal ribosomal protein uL16 family. Part of the 50S ribosomal subunit.

Functionally, binds 23S rRNA and is also seen to make contacts with the A and possibly P site tRNAs. The polypeptide is Large ribosomal subunit protein uL16 (Coxiella burnetii (strain RSA 331 / Henzerling II)).